A 480-amino-acid chain; its full sequence is Protein nucleotidyltransferase YdiU (480 aa).

ATP contacts are provided by glycine 86, glycine 88, arginine 89, lysine 109, aspartate 121, glycine 122, arginine 172, and arginine 179. The active-site Proton acceptor is aspartate 248. Positions 249 and 258 each coordinate Mg(2+). An ATP-binding site is contributed by aspartate 258.

It belongs to the SELO family. The cofactor is Mg(2+). Requires Mn(2+) as cofactor.

The catalysed reaction is L-seryl-[protein] + ATP = 3-O-(5'-adenylyl)-L-seryl-[protein] + diphosphate. The enzyme catalyses L-threonyl-[protein] + ATP = 3-O-(5'-adenylyl)-L-threonyl-[protein] + diphosphate. It carries out the reaction L-tyrosyl-[protein] + ATP = O-(5'-adenylyl)-L-tyrosyl-[protein] + diphosphate. It catalyses the reaction L-histidyl-[protein] + UTP = N(tele)-(5'-uridylyl)-L-histidyl-[protein] + diphosphate. The catalysed reaction is L-seryl-[protein] + UTP = O-(5'-uridylyl)-L-seryl-[protein] + diphosphate. The enzyme catalyses L-tyrosyl-[protein] + UTP = O-(5'-uridylyl)-L-tyrosyl-[protein] + diphosphate. Nucleotidyltransferase involved in the post-translational modification of proteins. It can catalyze the addition of adenosine monophosphate (AMP) or uridine monophosphate (UMP) to a protein, resulting in modifications known as AMPylation and UMPylation. The chain is Protein nucleotidyltransferase YdiU from Salmonella arizonae (strain ATCC BAA-731 / CDC346-86 / RSK2980).